The chain runs to 187 residues: MSEEKQTVEQNETEEQEIIEEQAAADEQQEETNESELLQNQINELQGLLEEKENKLLRVQADFENYKRRSRLEMEASQKYRSQNIVTDLLPALDSFERALQVEADNEQTKSLLQGMEMVHRQLVEALKKEGVEAIEAVGQEFDPNLHQAVMQAEDENYGSNIVVEEMQKGYKLKDRVIRPSMVKVNQ.

A disordered region spans residues 1–38; that stretch reads MSEEKQTVEQNETEEQEIIEEQAAADEQQEETNESELL. Over residues 11 to 34 the composition is skewed to acidic residues; that stretch reads NETEEQEIIEEQAAADEQQEETNE.

It belongs to the GrpE family. Homodimer.

It is found in the cytoplasm. Functionally, participates actively in the response to hyperosmotic and heat shock by preventing the aggregation of stress-denatured proteins, in association with DnaK and GrpE. It is the nucleotide exchange factor for DnaK and may function as a thermosensor. Unfolded proteins bind initially to DnaJ; upon interaction with the DnaJ-bound protein, DnaK hydrolyzes its bound ATP, resulting in the formation of a stable complex. GrpE releases ADP from DnaK; ATP binding to DnaK triggers the release of the substrate protein, thus completing the reaction cycle. Several rounds of ATP-dependent interactions between DnaJ, DnaK and GrpE are required for fully efficient folding. The sequence is that of Protein GrpE from Bacillus subtilis (strain 168).